The following is a 328-amino-acid chain: Tetraacyldisaccharide 4'-kinase (328 aa).

55–62 (TAGGNGKT) is an ATP binding site.

The protein belongs to the LpxK family.

The catalysed reaction is a lipid A disaccharide + ATP = a lipid IVA + ADP + H(+). It participates in glycolipid biosynthesis; lipid IV(A) biosynthesis; lipid IV(A) from (3R)-3-hydroxytetradecanoyl-[acyl-carrier-protein] and UDP-N-acetyl-alpha-D-glucosamine: step 6/6. Functionally, transfers the gamma-phosphate of ATP to the 4'-position of a tetraacyldisaccharide 1-phosphate intermediate (termed DS-1-P) to form tetraacyldisaccharide 1,4'-bis-phosphate (lipid IVA). This chain is Tetraacyldisaccharide 4'-kinase, found in Shigella dysenteriae serotype 1 (strain Sd197).